A 188-amino-acid polypeptide reads, in one-letter code: Large ribosomal subunit protein bL35m (188 aa).

It belongs to the bacterial ribosomal protein bL35 family.

It localises to the mitochondrion. This chain is Large ribosomal subunit protein bL35m (MRPL35), found in Pongo abelii (Sumatran orangutan).